Consider the following 258-residue polypeptide: Aspartate/glutamate leucyltransferase (258 aa).

It belongs to the R-transferase family. Bpt subfamily.

It is found in the cytoplasm. The enzyme catalyses N-terminal L-glutamyl-[protein] + L-leucyl-tRNA(Leu) = N-terminal L-leucyl-L-glutamyl-[protein] + tRNA(Leu) + H(+). It carries out the reaction N-terminal L-aspartyl-[protein] + L-leucyl-tRNA(Leu) = N-terminal L-leucyl-L-aspartyl-[protein] + tRNA(Leu) + H(+). Its function is as follows. Functions in the N-end rule pathway of protein degradation where it conjugates Leu from its aminoacyl-tRNA to the N-termini of proteins containing an N-terminal aspartate or glutamate. This is Aspartate/glutamate leucyltransferase from Rhodopseudomonas palustris (strain BisA53).